The primary structure comprises 638 residues: Probable potassium transport system protein Kup (638 aa).

Transmembrane regions (helical) follow at residues 25–45, 65–85, 114–134, 152–172, 184–204, 226–246, 262–282, 291–311, 352–372, 382–402, 410–430, and 434–454; these read LAIA…LYSL, VISL…LLFV, AGAL…DAVI, PHLS…LFWI, FGPI…YHIV, LLQA…AEAL, AYGL…ALLI, PFFL…STVA, IYVP…VVGF, YGIA…VVMV, LLVG…FGAN, and VAQG…LLMT.

The protein belongs to the HAK/KUP transporter (TC 2.A.72) family.

It localises to the cell inner membrane. It carries out the reaction K(+)(in) + H(+)(in) = K(+)(out) + H(+)(out). Functionally, transport of potassium into the cell. Likely operates as a K(+):H(+) symporter. The sequence is that of Probable potassium transport system protein Kup from Burkholderia cenocepacia (strain HI2424).